The chain runs to 618 residues: MSQLSSTLKRYTESSRYTDAPYAKSGYGTYTPSSYGANLAASFLEKEKLGFKPVSPTSFLPRPRTYGPSSILDCDRGRPLLRSDITGGSKRSESQTRGNERPSGSGLNGGSGFPYGVTSNSLSYLPMNARDQGVTLGQKKSNSQSDLARDFSSLRTSDSYRTSDGYRASDGFRIDPGNLGRSPMLARTRKELCALQGLYQAASRSEYLTDYLENYGRKGSAPQVLTQAPPSRVPEVLSPTYRPSGRYTLWEKNKGQASGPSRSTSPGRDTMNSKSAQGLAGLRNLGNTCFMNSILQCLSNTRELRDYCLQRLYMRDLGHTSSAHTALMEEFAKLIQTIWTSSPNDVVSPSEFKTQIQRYAPRFVGYNQQDAQEFLRFLLDGLHNEVNRVAARPKPSPESLDHLPDEEKGRQMWRKYLEREDSRIGDLFVGQLKSSLTCTDCGYCSTVFDPFWDLSLPIAKRGYPEVTLMDCMRLFTKEDVLDGDEKPTCCRCRARKRCIKKFSVQRFPKILVLHLKRFSESRIRTSKLTTFVNFPLRDLDLREFASENTNHAVYNLYAVSNHSGTTMGGHYTAYCRSPVTGEWHTFNDSSVTPMSSSQVRTSDAYLLFYELASPPSRM.

The interval 1-213 (MSQLSSTLKR…RSEYLTDYLE (213 aa)) is necessary for interaction with MDM4. Disordered stretches follow at residues 54–112 (VSPT…GGSG) and 246–274 (RYTLWEKNKGQASGPSRSTSPGRDTMNSK). Residues 90–100 (KRSESQTRGNE) show a composition bias toward basic and acidic residues. Over residues 255–274 (GQASGPSRSTSPGRDTMNSK) the composition is skewed to polar residues. The region spanning 280-612 (AGLRNLGNTC…DAYLLFYELA (333 aa)) is the USP domain. Cys289 (nucleophile) is an active-site residue. A necessary for interaction with MDM4 region spans residues 416-516 (YLEREDSRIG…FPKILVLHLK (101 aa)). Residues Cys438, Cys441, Cys489, and Cys492 each contribute to the Zn(2+) site. His570 (proton acceptor) is an active-site residue.

This sequence belongs to the peptidase C19 family. USP2 subfamily. Homooligomer. Found in trimeric complex with MDM2 and MDM4 and USP2. Interacts with CCND1; the interaction is direct and promotes its stabilization by antagonizing ubiquitin-dependent degradation. Interacts (via N-terminus and C-terminus) with MDM2. Interacts with MDM4. Interacts with PER1. Interacts with KCNQ1; counteracts the NEDD4L-specific down-regulation of I(Ks) and restores plasma membrane localization of KCNQ1. Isoform 4: Interacts with NHERF4 and CLTC. In terms of tissue distribution, expressed in mesangial cells of the kidney. Isoform 1 and isoform 2 are expressed in elongated spermatids; the shorter form appearing earlier than the longer form (at protein level). Isoform 1 and isoform 2 are expressed in early round spermatids of the testis. Isoform 1 is expressed in muscle and heart. Isoform 2 is expressed in muscle, lung, heart, brain, liver and ovary. During muscle differentiation, isoform 1 expression increases before the onset of membrane fusion and decreases as the myogenic processes proceeded; un counterpart, isoform 2 expression remains low until the burst of membrane fusion but increases thereafter.

It localises to the cytoplasm. The protein resides in the perinuclear region. The protein localises to the nucleus. Its subcellular location is the membrane. It carries out the reaction Thiol-dependent hydrolysis of ester, thioester, amide, peptide and isopeptide bonds formed by the C-terminal Gly of ubiquitin (a 76-residue protein attached to proteins as an intracellular targeting signal).. Its activity is regulated as follows. Cleavage is inhibited by ubiquitin in a dosage-dependent manner. Cleavage is blocked by ubiquitin aldehyde. Hydrolase that deubiquitinates polyubiquitinated target proteins such as MDM2, MDM4 and CCND1. Isoform 1 and isoform 2 possess both ubiquitin-specific peptidase and isopeptidase activities. Deubiquitinates MDM2 without reversing MDM2-mediated p53/TP53 ubiquitination and thus indirectly promotes p53/TP53 degradation and limits p53 activity. Has no deubiquitinase activity against p53/TP53. Prevents MDM2-mediated degradation of MDM4. Plays a role in the G1/S cell-cycle progression in normal and cancer cells. Regulates the circadian clock by modulating its intrinsic circadian rhythm and its capacity to respond to external cues. Associates with clock proteins and deubiquitinates core clock component PER1 but does not affect its overall stability. Regulates the nucleocytoplasmic shuttling and nuclear retention of PER1 and its repressive role on the clock transcription factors CLOCK and BMAL1. Plays a role in the regulation of myogenic differentiation of embryonic muscle cells. Its function is as follows. Circadian clock output effector that regulates Ca(2+) absorption in the small intestine. Probably functions by regulating protein levels of the membrane scaffold protein NHERF4 in a rhythmic manner, and is therefore likely to control Ca(2+) membrane permeability mediated by the Ca(2+) channel TRPV6 in the intestine. The chain is Ubiquitin carboxyl-terminal hydrolase 2 (Usp2) from Rattus norvegicus (Rat).